The sequence spans 245 residues: MIFVQQFEEVRLILEKAKKITVLTGAGASTESGIPDFRSANGLYADANVEMYLSRGYYNRSPKEFWKHYKEIFQINTFHQYKPNRGHRFLAELEEQGKDITILTQNIDGLHQLGDSKHVIDLHGTLQTAHCPKCKTGYDLQYMIDHEVPRCQKCNFILNPDVVLYGDTLPQYQNAIKRLYETDVLIVMGTSLKVQPVASFPQIAKREVGATTILVNEELTGQEYNFDYVFQNKIGEFVEGLSSIK.

Residues 1 to 245 (MIFVQQFEEV…EFVEGLSSIK (245 aa)) form the Deacetylase sirtuin-type domain. Positions 26, 30, 37, 38, 105, 107, 108, and 123 each coordinate NAD(+). Phe37 contacts nicotinamide. Ile107 and Asp108 together coordinate nicotinamide. Residue His123 is the Proton acceptor of the active site. Positions 131, 134, 151, and 154 each coordinate Zn(2+). Positions 190, 191, 216, and 234 each coordinate NAD(+).

The protein belongs to the sirtuin family. Class U subfamily. Zn(2+) serves as cofactor.

Its subcellular location is the cytoplasm. The enzyme catalyses N(6)-acetyl-L-lysyl-[protein] + NAD(+) + H2O = 2''-O-acetyl-ADP-D-ribose + nicotinamide + L-lysyl-[protein]. Its function is as follows. NAD-dependent protein deacetylase which modulates the activities of several enzymes which are inactive in their acetylated form. The protein is NAD-dependent protein deacetylase of Bacillus thuringiensis subsp. konkukian (strain 97-27).